A 712-amino-acid chain; its full sequence is 1,4-alpha-glucan branching enzyme GlgB (712 aa).

Aspartate 397 (nucleophile) is an active-site residue. Glutamate 450 (proton donor) is an active-site residue.

This sequence belongs to the glycosyl hydrolase 13 family. GlgB subfamily. In terms of assembly, monomer.

It carries out the reaction Transfers a segment of a (1-&gt;4)-alpha-D-glucan chain to a primary hydroxy group in a similar glucan chain.. It participates in glycan biosynthesis; glycogen biosynthesis. Its function is as follows. Catalyzes the formation of the alpha-1,6-glucosidic linkages in glycogen by scission of a 1,4-alpha-linked oligosaccharide from growing alpha-1,4-glucan chains and the subsequent attachment of the oligosaccharide to the alpha-1,6 position. The protein is 1,4-alpha-glucan branching enzyme GlgB of Bradyrhizobium sp. (strain BTAi1 / ATCC BAA-1182).